The chain runs to 132 residues: ATP synthase epsilon chain (132 aa).

This sequence belongs to the ATPase epsilon chain family. F-type ATPases have 2 components, CF(1) - the catalytic core - and CF(0) - the membrane proton channel. CF(1) has five subunits: alpha(3), beta(3), gamma(1), delta(1), epsilon(1). CF(0) has three main subunits: a, b and c.

Its subcellular location is the cell inner membrane. Produces ATP from ADP in the presence of a proton gradient across the membrane. This chain is ATP synthase epsilon chain, found in Gloeobacter violaceus (strain ATCC 29082 / PCC 7421).